We begin with the raw amino-acid sequence, 419 residues long: Copalyl diphosphate synthase 2, chloroplastic (419 aa).

Lysine 82 contacts substrate.

The protein belongs to the terpene synthase family. Tpsc subfamily. It depends on Mg(2+) as a cofactor. In terms of tissue distribution, ubiquitous expression in roots, stems, leaves and flowers.

It is found in the plastid. The protein resides in the chloroplast. The enzyme catalyses (2E,6E,10E)-geranylgeranyl diphosphate = (+)-copalyl diphosphate. It participates in secondary metabolite biosynthesis; terpenoid biosynthesis. Its function is as follows. Involved in the biosynthesis of ent-kaurene diterpenoids natural products such as oridonin, miltiradiene, eriocalyxin B and nezukol, known to exhibit antitumor, anti-inflammatory and antibacterial activities. Catalyzes the conversion of (2E,6E,10E)-geranylgeranyl diphosphate (GGPP) to (+)-copalyl diphosphate ((+)-CPP). The chain is Copalyl diphosphate synthase 2, chloroplastic from Isodon rubescens (Rabdosia rubescens).